The chain runs to 517 residues: DNA-binding protein Ikaros (517 aa).

A disordered region spans residues 1-71 (MDVDEGQDMS…QSDEENGRAC (71 aa)). Ser-13 bears the Phosphoserine mark. Thr-23 is modified (phosphothreonine). Over residues 37–47 (LSTTSGAQQNS) the composition is skewed to polar residues. A Glycyl lysine isopeptide (Lys-Gly) (interchain with G-Cter in SUMO) cross-link involves residue Lys-58. Ser-63 and Ser-101 each carry phosphoserine. The C2H2-type 1 zinc-finger motif lies at 117 to 139 (LKCDICGIVCIGPNVLMVHKRSH). Thr-140 is modified (phosphothreonine). Residues 144–166 (FQCNQCGASFTQKGNLLRHIKLH) form a C2H2-type 2 zinc finger. Positions 153–162 (FTQKGNLLRH) are required for both high-affinity DNA binding and pericentromeric heterochromatin localization. Ser-167 is modified (phosphoserine). The segment at 172–194 (FKCHLCNYACRRRDALTGHLRTH) adopts a C2H2-type 3 zinc-finger fold. The segment at 179 to 194 (YACRRRDALTGHLRTH) is required for both high-affinity DNA binding and pericentromeric heterochromatin localization. Ser-195 is modified (phosphoserine). A C2H2-type 4 zinc finger spans residues 200 to 223 (HKCGYCGRSYKQRSSLEEHKERCH). A Glycyl lysine isopeptide (Lys-Gly) (interchain with G-Cter in SUMO) cross-link involves residue Lys-239. Phosphoserine is present on residues Ser-259, Ser-287, Ser-293, Ser-357, Ser-360, Ser-384, Ser-386, Ser-388, and Ser-392. The disordered stretch occupies residues 376-400 (SVSSEREASPSNSCQDSTDTESNAE). At Thr-393 the chain carries Phosphothreonine. A phosphoserine mark is found at Ser-397 and Ser-440. C2H2-type zinc fingers lie at residues 457–479 (YKCE…MGCH) and 488–512 (FECN…RGEH). The interval 463–466 (RVLF) is required for binding PP1CC.

It belongs to the Ikaros C2H2-type zinc-finger protein family. Heterodimer with other IKAROS family members. Interacts with IKZF4 and IKZF5. Component of the chromatin-remodeling NuRD repressor complex which includes at least HDAC1, HDAC2, RBBP4, RBBP7, IKZF1, MTA2, MBD2, MBD3, MTA1L1, CHD3 and CHD4. Interacts directly with the CHD4 component of the NuRD complex. Interacts directly with SMARCA4; the interaction associates IKFZ1 with the BAF complex. Interacts with SUMO1; the interaction sumoylates IKAROS, promoted by PIAS2 and PIAS3. Interacts with PIAS2 (isoform alpha); the interaction promotes sumoylation and reduces transcription repression. Interacts, to a lesser extent, with PIAS3. Interacts with PPP1CC; the interaction targets PPP1CC to pericentromeric heterochromatin, dephosphorylates IKAROS, stabilizes it and prevents it from degradation. Interacts with IKZF3. In terms of processing, phosphorylation at Ser-357 and Ser-360 downstream of SYK induces nuclear translocation. Phosphorylation controls cell-cycle progression from late G(1) stage to S stage. Hyperphosphorylated during G2/M phase. Dephosphorylated state during late G(1) phase. Phosphorylation on Thr-140 is required for DNA and pericentromeric location during mitosis. CK2 is the main kinase, in vitro. GSK3 and CDK may also contribute to phosphorylation of the C-terminal serine and threonine residues. Phosphorylation on these C-terminal residues reduces the DNA-binding ability. Phosphorylation/dephosphorylation events on Ser-13 and Ser-293 regulate TDT expression during thymocyte differentiation. Dephosphorylation by protein phosphatase 1 regulates stability and pericentromeric heterochromatin location. Phosphorylated in both lymphoid and non-lymphoid tissues. Post-translationally, sumoylated. Simultaneous sumoylation on the 2 sites results in a loss of both HDAC-dependent and HDAC-independent repression. Has no effect on pericentromeric heterochromatin location. Desumoylated by SENP1. Polyubiquitinated. Strongly expressed in T-cells and their progenitors,in B-cells, and in all early embryonic retinal progenitor cells (RPCs). Isoforms V and VI are the predominant isoforms in lymphocytes.

The protein resides in the nucleus. It localises to the cytoplasm. Transcription regulator of hematopoietic cell differentiation. Binds gamma-satellite DNA. Binds with higher affinity to gamma satellite A. Plays a role in the development of lymphocytes, B- and T-cells. Binds and activates the enhancer (delta-A element) of the CD3-delta gene. Repressor of the TDT (terminal deoxynucleotidyltransferase) gene during thymocyte differentiation. Regulates transcription through association with both HDAC-dependent and HDAC-independent complexes. Targets the 2 chromatin-remodeling complexes, NuRD and BAF (SWI/SNF), in a single complex (PYR complex), to the beta-globin locus in adult erythrocytes. Increases normal apoptosis in adult erythroid cells. Confers early temporal competence to retinal progenitor cells (RPCs). Function is isoform-specific and is modulated by dominant-negative inactive isoforms. The chain is DNA-binding protein Ikaros (Ikzf1) from Mus musculus (Mouse).